Reading from the N-terminus, the 220-residue chain is Miraculin (220 aa).

The first 29 residues, 1–29, serve as a signal peptide directing secretion; it reads MKELTMLSLSFFFVSALLAAAANPLLSAA. Residue N71 is glycosylated (N-linked (GlcNAc...) asparagine). Disulfide bonds link C76–C121, C177–C188, and C181–C184. N-linked (GlcNAc...) asparagine glycosylation is present at N215.

Belongs to the protease inhibitor I3 (leguminous Kunitz-type inhibitor) family. In terms of assembly, homotetramer; dimer of homodimer. Glycosylated; contains as much as 13,9% of sugars (glucosamine, mannose, galactose, xylose, and fucose). Expressed in fruit pulp after pollination. Not expressed in seeds, stems or leaves.

Its function is as follows. Miraculin has the property of modifying a sour taste into a sweet taste. This alteration of taste perception persists for many minutes. The sequence is that of Miraculin from Synsepalum dulcificum (Miracle fruit).